Here is a 633-residue protein sequence, read N- to C-terminus: Glutamyl-tRNA(Gln) amidotransferase subunit E (633 aa).

The disordered stretch occupies residues 414–437 (ALPDGNTEYMRPLPGKARMYPETD).

This sequence belongs to the GatB/GatE family. GatE subfamily. Heterodimer of GatD and GatE.

It catalyses the reaction L-glutamyl-tRNA(Gln) + L-glutamine + ATP + H2O = L-glutaminyl-tRNA(Gln) + L-glutamate + ADP + phosphate + H(+). Functionally, allows the formation of correctly charged Gln-tRNA(Gln) through the transamidation of misacylated Glu-tRNA(Gln) in organisms which lack glutaminyl-tRNA synthetase. The reaction takes place in the presence of glutamine and ATP through an activated gamma-phospho-Glu-tRNA(Gln). The GatDE system is specific for glutamate and does not act on aspartate. The polypeptide is Glutamyl-tRNA(Gln) amidotransferase subunit E (Pyrococcus abyssi (strain GE5 / Orsay)).